Consider the following 390-residue polypeptide: Na(+)/H(+) antiporter NhaA (390 aa).

The next 11 membrane-spanning stretches (helical) occupy residues 13 to 33 (FQLE…ALVI), 61 to 81 (LSVH…FVTL), 99 to 119 (LLPI…YVFI), 129 to 149 (GWAI…SLLG), 158 to 178 (VFLT…IAFF), 181 to 201 (GDLS…LLTL), 209 to 229 (FIPY…SGIH), 259 to 279 (AISP…NAGV), 297 to 317 (ILLG…FIAV), 330 to 350 (WLSL…SLFV), and 367 to 387 (IGVL…LLYA).

It belongs to the NhaA Na(+)/H(+) (TC 2.A.33) antiporter family.

It localises to the cell inner membrane. It catalyses the reaction Na(+)(in) + 2 H(+)(out) = Na(+)(out) + 2 H(+)(in). Functionally, na(+)/H(+) antiporter that extrudes sodium in exchange for external protons. This is Na(+)/H(+) antiporter NhaA from Pelagibacter ubique (strain HTCC1062).